The following is a 138-amino-acid chain: 1,4-dihydroxy-2-naphthoyl-CoA hydrolase (138 aa).

The active site involves D13.

This sequence belongs to the 4-hydroxybenzoyl-CoA thioesterase family. DHNA-CoA hydrolase subfamily.

The catalysed reaction is 1,4-dihydroxy-2-naphthoyl-CoA + H2O = 1,4-dihydroxy-2-naphthoate + CoA + H(+). The protein operates within cofactor biosynthesis; phylloquinone biosynthesis. It functions in the pathway quinol/quinone metabolism; 1,4-dihydroxy-2-naphthoate biosynthesis; 1,4-dihydroxy-2-naphthoate from chorismate: step 7/7. In terms of biological role, catalyzes the hydrolysis of 1,4-dihydroxy-2-naphthoyl-CoA (DHNA-CoA) to 1,4-dihydroxy-2-naphthoate (DHNA), a reaction involved in phylloquinone (vitamin K1) biosynthesis. In Microcystis aeruginosa (strain NIES-843 / IAM M-2473), this protein is 1,4-dihydroxy-2-naphthoyl-CoA hydrolase.